The primary structure comprises 384 residues: tRNA-dihydrouridine(20) synthase [NAD(P)+] (384 aa).

FMN is bound by residues 12 to 14 (PMV) and Gln-88. Catalysis depends on Cys-117, which acts as the Proton donor. FMN is bound by residues Lys-160, His-188, 222 to 224 (NGA), and 249 to 250 (AE). The tract at residues 359–384 (KQKRKQTDHIGSDTKKQKVVPLPTDI) is disordered. The span at 363-374 (KQTDHIGSDTKK) shows a compositional bias: basic and acidic residues.

The protein belongs to the Dus family. Dus2 subfamily. As to quaternary structure, monomer. The cofactor is FMN. Post-translationally, N-glycosylated.

The protein resides in the cytoplasm. The protein localises to the nucleus. The catalysed reaction is 5,6-dihydrouridine(20) in tRNA + NADP(+) = uridine(20) in tRNA + NADPH + H(+). The enzyme catalyses 5,6-dihydrouridine(20) in tRNA + NAD(+) = uridine(20) in tRNA + NADH + H(+). It catalyses the reaction a 5,6-dihydrouridine in mRNA + NAD(+) = a uridine in mRNA + NADH + H(+). It carries out the reaction a 5,6-dihydrouridine in mRNA + NADP(+) = a uridine in mRNA + NADPH + H(+). Functionally, catalyzes the NADPH-dependent synthesis of dihydrouridine, a modified base found in the D-loop of most tRNAs. Specifically modifies U20 in cytoplasmic tRNAs. Also able to mediate dihydrouridylation of some mRNAs, thereby affecting their translation. The protein is tRNA-dihydrouridine(20) synthase [NAD(P)+] (SMM1) of Saccharomyces cerevisiae (strain ATCC 204508 / S288c) (Baker's yeast).